Reading from the N-terminus, the 216-residue chain is Probable inactive E3 ubiquitin-protein ligase SINAT6 (216 aa).

The SIAH-type zinc finger occupies 5 to 74 (INDLQVESRV…LLLHLRNDHN (70 aa)).

This sequence belongs to the SINA (Seven in absentia) family. As to quaternary structure, homodimer. Interacts with SINAT1, SINAT2, SINAT3, SINAT4 and SINAT5. Interacts with ATG6 and TRAF1A. As to expression, expressed in roots, rosette leaves, cauline leaves, guard cells and flowers.

It localises to the cytoplasm. The protein localises to the nucleus. Its function is as follows. Probable inactive E3 ubiquitin-protein ligase that plays a role in regulation of autophagy. Upon starvation, involved in maintaining ATG6 homeostasis by competitively associating with ATG6, a component of the autophagosome complex. Acts as a positive regulator of drought stress response. Functions as a positive regulator of abscisic acid-mediated stomatal closure. The polypeptide is Probable inactive E3 ubiquitin-protein ligase SINAT6 (Arabidopsis thaliana (Mouse-ear cress)).